We begin with the raw amino-acid sequence, 202 residues long: MMQDVSSSPVSPADDSLSNSEEEPDRQQPPSGKRGGRKRRSSRRSAGGGAGPGGAAGGGVGGGDEPGSPAQGKRGKKSAGCGGGGGAGGGGGSSSGGGSPQSYEELQTQRVMANVRERQRTQSLNEAFAALRKIIPTLPSDKLSKIQTLKLAARYIDFLYQVLQSDELDSKMASCSYVAHERLSYAFSVWRMEGAWSMSASH.

Residues 1 to 18 (MMQDVSSSPVSPADDSLS) show a composition bias toward low complexity. Positions 1–105 (MMQDVSSSPV…GGGSPQSYEE (105 aa)) are disordered. Basic residues predominate over residues 34–43 (RGGRKRRSSR). Gly residues-rich tracts occupy residues 46 to 65 (AGGG…GGDE) and 80 to 99 (GCGG…GGGS). Residues 108 to 159 (TQRVMANVRERQRTQSLNEAFAALRKIIPTLPSDKLSKIQTLKLAARYIDFL) form the bHLH domain. The tract at residues 161–191 (QVLQSDELDSKMASCSYVAHERLSYAFSVWR) is sufficient for transactivation activity.

In terms of assembly, efficient DNA binding requires dimerization with another bHLH protein. Homodimer or heterodimer with E proteins such as TCF3. ID1 binds preferentially to TCF3 but does not interact efficiently with TWIST1 so ID1 levels control the amount of TCF3 available to dimerize with TWIST1 and thus determine the type of dimer formed. As to expression, subset of mesodermal cells.

The protein localises to the nucleus. In terms of biological role, acts as a transcriptional regulator. Inhibits myogenesis by sequestrating E proteins, inhibiting trans-activation by MEF2, and inhibiting DNA-binding by MYOD1 through physical interaction. This interaction probably involves the basic domains of both proteins. Also represses expression of pro-inflammatory cytokines such as TNFA and IL1B. Regulates cranial suture patterning and fusion. Activates transcription as a heterodimer with E proteins. Regulates gene expression differentially, depending on dimer composition. Homodimers induce expression of FGFR2 and POSTN while heterodimers repress FGFR2 and POSTN expression and induce THBS1 expression. Heterodimerization is also required for osteoblast differentiation. Represses the activity of the circadian transcriptional activator: NPAS2-BMAL1 heterodimer. This Homo sapiens (Human) protein is Twist-related protein 1 (TWIST1).